The chain runs to 260 residues: Apolipoprotein A-I (260 aa).

The N-terminal stretch at 1-18 (MKFAALALALLLAVGSHA) is a signal peptide. The 3 X approximate tandem repeats stretch occupies residues 32 to 63 (ARAVLDVYLTQVKDMSLRAVNQLDDPQYAEFK). 2 repeat units span residues 64–85 (TNLA…GSVS) and 87–107 (MTDS…ESLN). The interval 64–260 (TNLAQRIEEM…EIIAASVTKS (197 aa)) is 10 X approximate tandem repeats. A 3; half-length repeat occupies 108-118 (VDLEALKSSLA). 5 tandem repeats follow at residues 119-140 (PQNE…TLLT), 141-162 (PIYN…TRLE), 163-184 (PVME…AVLM), 185-206 (PMVE…EVVQ), and 207-225 (PYVQ…QAQT). The 9; half-length repeat unit spans residues 226–236 (VDTDALRTKIT). Repeat 10 spans residues 237–260 (PLVEEIKVKMNAIFEIIAASVTKS).

Belongs to the apolipoprotein A1/A4/E family. In terms of tissue distribution, strong expression in liver with lower expression in intestine.

Its subcellular location is the secreted. Its function is as follows. Participates in the reverse transport of cholesterol from tissues to the liver for excretion by promoting cholesterol efflux from tissues and by acting as a cofactor for the lecithin cholesterol acyltransferase (LCAT). The polypeptide is Apolipoprotein A-I (apoa1) (Sparus aurata (Gilthead sea bream)).